The primary structure comprises 949 residues: Glycine dehydrogenase (decarboxylating) (949 aa).

Lys-700 is modified (N6-(pyridoxal phosphate)lysine).

It belongs to the GcvP family. As to quaternary structure, the glycine cleavage system is composed of four proteins: P, T, L and H. Pyridoxal 5'-phosphate serves as cofactor.

It catalyses the reaction N(6)-[(R)-lipoyl]-L-lysyl-[glycine-cleavage complex H protein] + glycine + H(+) = N(6)-[(R)-S(8)-aminomethyldihydrolipoyl]-L-lysyl-[glycine-cleavage complex H protein] + CO2. In terms of biological role, the glycine cleavage system catalyzes the degradation of glycine. The P protein binds the alpha-amino group of glycine through its pyridoxal phosphate cofactor; CO(2) is released and the remaining methylamine moiety is then transferred to the lipoamide cofactor of the H protein. This chain is Glycine dehydrogenase (decarboxylating), found in Flavobacterium johnsoniae (strain ATCC 17061 / DSM 2064 / JCM 8514 / BCRC 14874 / CCUG 350202 / NBRC 14942 / NCIMB 11054 / UW101) (Cytophaga johnsonae).